Reading from the N-terminus, the 497-residue chain is Subtilisin-like protease CPC735_031240 (497 aa).

A signal peptide spans 1–16 (MKGVLSLSLLPLLAAP). Positions 17–136 (SPILVDTIHR…IEKDSEVHAW (120 aa)) are excised as a propeptide. The 92-residue stretch at 43–134 (SYIVVFKKNV…QYIEKDSEVH (92 aa)) folds into the Inhibitor I9 domain. A Peptidase S8 domain is found at 146 to 452 (PWGLARVSHR…GGSSNYTAII (307 aa)). Residues D182 and H214 each act as charge relay system in the active site. 2 N-linked (GlcNAc...) asparagine glycosylation sites follow: N244 and N284. S380 acts as the Charge relay system in catalysis. N-linked (GlcNAc...) asparagine glycosylation occurs at N447.

This sequence belongs to the peptidase S8 family.

It is found in the secreted. Its function is as follows. Secreted subtilisin-like serine protease with keratinolytic activity that contributes to pathogenicity. In Coccidioides posadasii (strain C735) (Valley fever fungus), this protein is Subtilisin-like protease CPC735_031240.